Here is a 149-residue protein sequence, read N- to C-terminus: Inner membrane protein YidI (149 aa).

Over 1-8 the chain is Cytoplasmic; it reads MGIIAQNK. Residues 9 to 31 traverse the membrane as a helical segment; the sequence is ISSLGMLFGAIALMMGIIHFSFG. At 32–77 the chain is on the periplasmic side; that stretch reads PFSAPPPTFESIVADKTAEIKRGLLAGIKGEKITTVEKKEDVDVDK. The chain crosses the membrane as a helical span at residues 78-97; the sequence is ILNQSGIALAIAALLCAFIG. The Cytoplasmic segment spans residues 98–117; that stretch reads GMRKENRWGIRGALVFGGGT. Residues 118–140 traverse the membrane as a helical segment; it reads LAFHTLLFGIGIVCSILLIFLIF. Residues 141–149 lie on the Periplasmic side of the membrane; it reads SFLTGGSLV.

Its subcellular location is the cell inner membrane. In Escherichia coli (strain K12), this protein is Inner membrane protein YidI (yidI).